The following is a 45-amino-acid chain: Photosystem II reaction center protein K (45 aa).

The propeptide occupies 1 to 8 (MDVNFLLS). Residues 20-40 (IVDVMPAIPVFFLLLAFVWQA) traverse the membrane as a helical segment.

The protein belongs to the PsbK family. As to quaternary structure, PSII is composed of 1 copy each of membrane proteins PsbA, PsbB, PsbC, PsbD, PsbE, PsbF, PsbH, PsbI, PsbJ, PsbK, PsbL, PsbM, PsbT, PsbX, PsbY, PsbZ, Psb30/Ycf12, at least 3 peripheral proteins of the oxygen-evolving complex and a large number of cofactors. It forms dimeric complexes.

The protein localises to the plastid. The protein resides in the chloroplast thylakoid membrane. Functionally, one of the components of the core complex of photosystem II (PSII). PSII is a light-driven water:plastoquinone oxidoreductase that uses light energy to abstract electrons from H(2)O, generating O(2) and a proton gradient subsequently used for ATP formation. It consists of a core antenna complex that captures photons, and an electron transfer chain that converts photonic excitation into a charge separation. The chain is Photosystem II reaction center protein K from Emiliania huxleyi (Coccolithophore).